A 428-amino-acid polypeptide reads, in one-letter code: MKVKVENVEKNVVQLEIEVDTAKFEEGMQQSYLKNVKKFNVPGFRKGKAPRNIIERYYGEQALYDDAINIVCSEAYDNAIEENNINPVDRPEIDIVQIGKNQNLIFTAKVTVKPEVELGAYMGVEAKKAEANVTDEDLENEFNKVVEKNARLVSVTDRPIQSGDTAVIDFEGFIDSVPFEGGKGEDYSLVIGSGTFIPGFEDQLIGKNIADDVDVNVSFPEEYGKEELNGKEALFKVLIKEIKVKELPTVDDEFAKDISEFDTLEEYKNDLRNKLEESAKSKAERDNEESVIQAVVGNATVDIPNVMVEKHIDAMARDFDMRLRYQGLDLQRYLEIMGTDFEGFREQFRERAANEVKIQLVIEKISKVENVEATDADVEEEITKTAEAYKQPVEELKKTLRPEDLEYVKNDIAFRKTIKILVDNAKLN.

In terms of domain architecture, PPIase FKBP-type spans 163–248 (GDTAVIDFEG…IKEIKVKELP (86 aa)).

This sequence belongs to the FKBP-type PPIase family. Tig subfamily.

It localises to the cytoplasm. The enzyme catalyses [protein]-peptidylproline (omega=180) = [protein]-peptidylproline (omega=0). In terms of biological role, involved in protein export. Acts as a chaperone by maintaining the newly synthesized protein in an open conformation. Functions as a peptidyl-prolyl cis-trans isomerase. The protein is Trigger factor of Ruminiclostridium cellulolyticum (strain ATCC 35319 / DSM 5812 / JCM 6584 / H10) (Clostridium cellulolyticum).